The sequence spans 202 residues: MRHPFKVVVVTGVPGVGKTTVIKELQGLAEKEGVKLHIVNFGSFMLDTAVKLGLVEDRDKIRTLPLRRQLELQREAAKRIVAEASKALGGDGVLIIDTHALVKTVAGYWPGLPKHVLDELKPDMIAVVEASPEEVAARQARDTTRYRVDIGGVEGVKRLMENARAASIASAIQYASTVAIVENREGEAAKAAEELLRLIKNL.

12–20 (GVPGVGKTT) is an ATP binding site.

It belongs to the archaeal adenylate kinase family.

The protein resides in the cytoplasm. The catalysed reaction is AMP + ATP = 2 ADP. The chain is Adenylate kinase (adkA) from Aeropyrum pernix (strain ATCC 700893 / DSM 11879 / JCM 9820 / NBRC 100138 / K1).